The chain runs to 158 residues: uncharacterized protein (158 aa).

The interval 1 to 26 is disordered; sequence MRASRSPPSPRRCHHHHEATGAASGA.

This is an uncharacterized protein from Homo sapiens (Human).